We begin with the raw amino-acid sequence, 391 residues long: UDP-N-acetylglucosamine--N-acetylmuramyl-(pentapeptide) pyrophosphoryl-undecaprenol N-acetylglucosamine transferase (391 aa).

UDP-N-acetyl-alpha-D-glucosamine is bound by residues 11–13 (TGG), Arg176, Ser206, and Gln312.

This sequence belongs to the glycosyltransferase 28 family. MurG subfamily.

It localises to the cell inner membrane. It carries out the reaction di-trans,octa-cis-undecaprenyl diphospho-N-acetyl-alpha-D-muramoyl-L-alanyl-D-glutamyl-meso-2,6-diaminopimeloyl-D-alanyl-D-alanine + UDP-N-acetyl-alpha-D-glucosamine = di-trans,octa-cis-undecaprenyl diphospho-[N-acetyl-alpha-D-glucosaminyl-(1-&gt;4)]-N-acetyl-alpha-D-muramoyl-L-alanyl-D-glutamyl-meso-2,6-diaminopimeloyl-D-alanyl-D-alanine + UDP + H(+). It participates in cell wall biogenesis; peptidoglycan biosynthesis. Cell wall formation. Catalyzes the transfer of a GlcNAc subunit on undecaprenyl-pyrophosphoryl-MurNAc-pentapeptide (lipid intermediate I) to form undecaprenyl-pyrophosphoryl-MurNAc-(pentapeptide)GlcNAc (lipid intermediate II). This Treponema denticola (strain ATCC 35405 / DSM 14222 / CIP 103919 / JCM 8153 / KCTC 15104) protein is UDP-N-acetylglucosamine--N-acetylmuramyl-(pentapeptide) pyrophosphoryl-undecaprenol N-acetylglucosamine transferase.